We begin with the raw amino-acid sequence, 142 residues long: Hemoglobin subunit alpha (142 aa).

The Globin domain occupies 2 to 142 (VLSSADKNNV…VSTVLTSKYR (141 aa)). Ser4 carries the phosphoserine modification. Residues Lys8 and Lys12 each carry the N6-succinyllysine modification. Position 17 is an N6-acetyllysine; alternate (Lys17). An N6-succinyllysine; alternate modification is found at Lys17. Tyr25 bears the Phosphotyrosine mark. Ser36 is subject to Phosphoserine. An N6-succinyllysine modification is found at Lys41. Position 50 is a phosphoserine (Ser50). His59 contributes to the O2 binding site. Heme b is bound at residue His88. The residue at position 103 (Ser103) is a Phosphoserine. Thr109 bears the Phosphothreonine mark. Ser125 carries the phosphoserine modification. Phosphothreonine is present on residues Thr135 and Thr138. Ser139 carries the post-translational modification Phosphoserine.

This sequence belongs to the globin family. Heterotetramer of two alpha chains and two beta chains. Red blood cells.

In terms of biological role, involved in oxygen transport from the lung to the various peripheral tissues. Its function is as follows. Hemopressin acts as an antagonist peptide of the cannabinoid receptor CNR1. Hemopressin-binding efficiently blocks cannabinoid receptor CNR1 and subsequent signaling. The chain is Hemoglobin subunit alpha (HBA) from Panthera leo (Lion).